Consider the following 66-residue polypeptide: Large ribosomal subunit protein bL33c (66 aa).

It belongs to the bacterial ribosomal protein bL33 family.

It is found in the plastid. Its subcellular location is the chloroplast. The sequence is that of Large ribosomal subunit protein bL33c from Ipomoea purpurea (Common morning glory).